Here is a 1010-residue protein sequence, read N- to C-terminus: Retinoblastoma-related protein 3 (1010 aa).

Positions 416–616 (TPVSTAMTTA…EKGSSMYNSL (201 aa)) are domain A. The interval 416 to 858 (TPVSTAMTTA…NEVFIPAVKS (443 aa)) is pocket. The segment at 617–727 (IVARPALSVE…PAAGGETCAE (111 aa)) is spacer. Positions 728 to 858 (TGIGVFFSKI…NEVFIPAVKS (131 aa)) are domain B. 2 disordered regions span residues 867–889 (ASAS…FPES) and 986–1010 (GSDR…PSDS).

The protein belongs to the retinoblastoma protein (RB) family.

It localises to the nucleus. In terms of biological role, regulator of biological processes that recruits a histone deacetylase to control gene transcription. May play a role in the entry into mitosis, negatively regulating the cell proliferation. Formation of stable complexes with geminiviridae replication-associated proteins may create a cellular environment which favors viral DNA replication. The protein is Retinoblastoma-related protein 3 (RBR3) of Zea mays (Maize).